A 783-amino-acid chain; its full sequence is Endonuclease MutS2 (783 aa).

328–335 (GPNTGGKT) is an ATP binding site. Residues 708-783 (LDLRGKRYEE…GSGCTIATLG (76 aa)) form the Smr domain.

The protein belongs to the DNA mismatch repair MutS family. MutS2 subfamily. As to quaternary structure, homodimer. Binds to stalled ribosomes, contacting rRNA.

In terms of biological role, endonuclease that is involved in the suppression of homologous recombination and thus may have a key role in the control of bacterial genetic diversity. Functionally, acts as a ribosome collision sensor, splitting the ribosome into its 2 subunits. Detects stalled/collided 70S ribosomes which it binds and splits by an ATP-hydrolysis driven conformational change. Acts upstream of the ribosome quality control system (RQC), a ribosome-associated complex that mediates the extraction of incompletely synthesized nascent chains from stalled ribosomes and their subsequent degradation. Probably generates substrates for RQC. The chain is Endonuclease MutS2 from Streptococcus thermophilus (strain ATCC BAA-250 / LMG 18311).